Consider the following 101-residue polypeptide: Small ribosomal subunit protein uS14 (101 aa).

Belongs to the universal ribosomal protein uS14 family. Part of the 30S ribosomal subunit. Contacts proteins S3 and S10.

Binds 16S rRNA, required for the assembly of 30S particles and may also be responsible for determining the conformation of the 16S rRNA at the A site. The sequence is that of Small ribosomal subunit protein uS14 from Polaromonas naphthalenivorans (strain CJ2).